The following is a 60-amino-acid chain: Ixodegrin-like peptide (60 aa).

The signal sequence occupies residues 1–21; sequence MNAAFIAALLILGALTLDAMA. A Cell attachment site motif is present at residues 49-51; that stretch reads RGD.

This sequence belongs to the ixodegrin family. Post-translationally, contains 3 disulfide bonds. In terms of tissue distribution, expressed in salivary glands.

The protein resides in the secreted. Functionally, tick salivary platelet aggregation inhibitor that plays an important part in the anti-hemostatic strategy of ticks. Inhibits platelet aggregation induced by ADP, thrombin and thromboxane A2 (TXA2). Blocks platelet adhesion to soluble collagen (most probably through the binding to alpha-2/beta-1 integrin (ITGA2/ITGB1)) and binds to purified glycoprotein IIb/IIIa (ITGA2B/ITGB3) in a dose-dependent manner. In vivo, reduces thrombus weight effectively in a rat arteriovenous shunt model and inhibits thrombosis in a carrageenan-induced mouse tail thrombosis model. The sequence is that of Ixodegrin-like peptide from Ixodes scapularis (Black-legged tick).